Reading from the N-terminus, the 293-residue chain is 4-diphosphocytidyl-2-C-methyl-D-erythritol kinase (293 aa).

The active site involves Lys23. Position 109–119 (109–119) interacts with ATP; sequence PVAAGIGGGSA. Asp151 is an active-site residue.

It belongs to the GHMP kinase family. IspE subfamily.

It catalyses the reaction 4-CDP-2-C-methyl-D-erythritol + ATP = 4-CDP-2-C-methyl-D-erythritol 2-phosphate + ADP + H(+). Its pathway is isoprenoid biosynthesis; isopentenyl diphosphate biosynthesis via DXP pathway; isopentenyl diphosphate from 1-deoxy-D-xylulose 5-phosphate: step 3/6. Functionally, catalyzes the phosphorylation of the position 2 hydroxy group of 4-diphosphocytidyl-2C-methyl-D-erythritol. This Rhizorhabdus wittichii (strain DSM 6014 / CCUG 31198 / JCM 15750 / NBRC 105917 / EY 4224 / RW1) (Sphingomonas wittichii) protein is 4-diphosphocytidyl-2-C-methyl-D-erythritol kinase.